Reading from the N-terminus, the 88-residue chain is MISKQEKKLLVKKYGKNEKDTGNAFVQVALLTHDIEKLKPHFQANPKDFHSRRGFLAKITQRKTLLAYLKKNDPETYLKCLEEFKLRK.

Belongs to the universal ribosomal protein uS15 family. As to quaternary structure, part of the 30S ribosomal subunit. Forms a bridge to the 50S subunit in the 70S ribosome, contacting the 23S rRNA.

Functionally, one of the primary rRNA binding proteins, it binds directly to 16S rRNA where it helps nucleate assembly of the platform of the 30S subunit by binding and bridging several RNA helices of the 16S rRNA. In terms of biological role, forms an intersubunit bridge (bridge B4) with the 23S rRNA of the 50S subunit in the ribosome. This is Small ribosomal subunit protein uS15 from Mycoplasmopsis synoviae (strain 53) (Mycoplasma synoviae).